Here is a 272-residue protein sequence, read N- to C-terminus: MKTVSQLIDMKQKQTKISMVTAYDFPSAKQVEAAGIDMILVGDSLGMTVLGYESTVQVTLADMIHHGRAVRRGAPNTFVVVDMPIGAVGISMTQDLNHALKLYQETNANAIKAEGAHITPFIEKATAIGIPVVAHLGLTPQSVGVMGYKLQGATKEAAEQLILDAKNVEKAGAVALVLEAIPNDLAEEISKHLTIPVIGIGAGKGTDGQVLVYHDMLNYGIEHKAKFVKQFADFSVGVDGLKQYDQEVKSGAFPSEEYTYKKKIMNEVNNND.

Mg(2+) contacts are provided by Asp43 and Asp82. Residues 43-44, Asp82, and Lys112 each bind 3-methyl-2-oxobutanoate; that span reads DS. Residue Glu114 participates in Mg(2+) binding. The active-site Proton acceptor is Glu179.

The protein belongs to the PanB family. In terms of assembly, homodecamer; pentamer of dimers. Mg(2+) is required as a cofactor.

Its subcellular location is the cytoplasm. The enzyme catalyses 3-methyl-2-oxobutanoate + (6R)-5,10-methylene-5,6,7,8-tetrahydrofolate + H2O = 2-dehydropantoate + (6S)-5,6,7,8-tetrahydrofolate. Its pathway is cofactor biosynthesis; (R)-pantothenate biosynthesis; (R)-pantoate from 3-methyl-2-oxobutanoate: step 1/2. Its function is as follows. Catalyzes the reversible reaction in which hydroxymethyl group from 5,10-methylenetetrahydrofolate is transferred onto alpha-ketoisovalerate to form ketopantoate. This chain is 3-methyl-2-oxobutanoate hydroxymethyltransferase, found in Staphylococcus aureus (strain MRSA252).